A 191-amino-acid polypeptide reads, in one-letter code: UPF0302 protein USA300HOU_1400 (191 aa).

Belongs to the UPF0302 family.

This is UPF0302 protein USA300HOU_1400 from Staphylococcus aureus (strain USA300 / TCH1516).